A 261-amino-acid chain; its full sequence is Probable septum site-determining protein MinC (261 aa).

It belongs to the MinC family. Interacts with MinD and FtsZ.

Its function is as follows. Cell division inhibitor that blocks the formation of polar Z ring septums. Rapidly oscillates between the poles of the cell to destabilize FtsZ filaments that have formed before they mature into polar Z rings. Prevents FtsZ polymerization. This chain is Probable septum site-determining protein MinC, found in Burkholderia cenocepacia (strain ATCC BAA-245 / DSM 16553 / LMG 16656 / NCTC 13227 / J2315 / CF5610) (Burkholderia cepacia (strain J2315)).